The chain runs to 247 residues: Probable transcriptional regulatory protein ECA2494 (247 aa).

The protein belongs to the TACO1 family.

The protein resides in the cytoplasm. In Pectobacterium atrosepticum (strain SCRI 1043 / ATCC BAA-672) (Erwinia carotovora subsp. atroseptica), this protein is Probable transcriptional regulatory protein ECA2494.